The following is a 294-amino-acid chain: uncharacterized protein (294 aa).

A disordered region spans residues 1 to 32 (MSHLKDPTTQYYTGEYPKQKQPTPGIQAKMTP). At Lys-39 the chain carries N6-acetyllysine. Residue 53–77 (LVTGGDSGIGRAAAIAYAREGADVA) coordinates NADP(+). Position 186 (Ser-186) interacts with substrate. The Proton acceptor role is filled by Tyr-199.

It belongs to the short-chain dehydrogenases/reductases (SDR) family.

This is an uncharacterized protein from Escherichia coli (strain K12).